The following is a 239-amino-acid chain: DUP240 protein DFP3 (239 aa).

The Cytoplasmic segment spans residues 1-54; sequence MQPHLDNNSNNDDVKLDTLGEQNVLSSAENITLPEDTFKSYMTYLLYEMAHYKP. A helical transmembrane segment spans residues 55–75; that stretch reads MIFSFLALSVSILIVVIFHNV. Residues 76-79 are Extracellular-facing; that stretch reads KACD. The helical transmembrane segment at 80-104 threads the bilayer; that stretch reads VVFGFSIFVTSILFLSTLIPFNVYI. Residues 105 to 239 are Cytoplasmic-facing; sequence SDEGFRIKLL…RKQYPDADIP (135 aa).

This sequence belongs to the DUP/COS family. In terms of assembly, interacts according to large scale protein interaction studies with MEC3 and ULP1.

The protein resides in the membrane. In Saccharomyces cerevisiae (strain ATCC 204508 / S288c) (Baker's yeast), this protein is DUP240 protein DFP3.